An 80-amino-acid chain; its full sequence is Serine protease inhibitor Kazal-type 1 (80 aa).

Positions 1 to 23 (MKVAVIFLLSALALLSLAGNTFS) are cleaved as a signal peptide. In terms of domain architecture, Kazal-like spans 27–80 (TGKEASCHDAVAGCPRIYDPVCGTDGITYANECVLCFENRKRIEPVLIRKGGPC). 3 cysteine pairs are disulfide-bonded: Cys-33–Cys-62, Cys-40–Cys-59, and Cys-48–Cys-80.

As to expression, in the genital tract, expressed only in male accessory glands including seminal vesicle, coagulating gland and prostate.

The protein resides in the secreted. Serine protease inhibitor which exhibits anti-trypsin activity. In the pancreas, protects against trypsin-catalyzed premature activation of zymogens. In terms of biological role, in the male reproductive tract, binds to sperm heads where it modulates sperm capacitance by inhibiting calcium uptake and nitrogen oxide (NO) production. The sequence is that of Serine protease inhibitor Kazal-type 1 from Mus musculus (Mouse).